Here is a 127-residue protein sequence, read N- to C-terminus: Fluoride-specific ion channel FluC (127 aa).

4 helical membrane-spanning segments follow: residues 4–24 (LSVL…RYLI), 38–58 (YGTL…IAAF), 71–91 (IIGL…MDNV), and 104–124 (LNVL…FQLL). Glycine 78 and threonine 81 together coordinate Na(+).

This sequence belongs to the fluoride channel Fluc/FEX (TC 1.A.43) family.

The protein resides in the cell inner membrane. It catalyses the reaction fluoride(in) = fluoride(out). Its activity is regulated as follows. Na(+) is not transported, but it plays an essential structural role and its presence is essential for fluoride channel function. Functionally, fluoride-specific ion channel. Important for reducing fluoride concentration in the cell, thus reducing its toxicity. This chain is Fluoride-specific ion channel FluC, found in Vibrio campbellii (strain ATCC BAA-1116).